The following is a 341-amino-acid chain: Anthranilate phosphoribosyltransferase (341 aa).

5-phospho-alpha-D-ribose 1-diphosphate contacts are provided by residues G79, 82–83 (GD), T87, 89–92 (NIST), 107–115 (KHGNRAVSS), and S119. G79 provides a ligand contact to anthranilate. S91 contributes to the Mg(2+) binding site. N110 provides a ligand contact to anthranilate. An anthranilate-binding site is contributed by R165. 2 residues coordinate Mg(2+): D224 and E225.

Belongs to the anthranilate phosphoribosyltransferase family. In terms of assembly, homodimer. Mg(2+) serves as cofactor.

It carries out the reaction N-(5-phospho-beta-D-ribosyl)anthranilate + diphosphate = 5-phospho-alpha-D-ribose 1-diphosphate + anthranilate. It participates in amino-acid biosynthesis; L-tryptophan biosynthesis; L-tryptophan from chorismate: step 2/5. In terms of biological role, catalyzes the transfer of the phosphoribosyl group of 5-phosphorylribose-1-pyrophosphate (PRPP) to anthranilate to yield N-(5'-phosphoribosyl)-anthranilate (PRA). The chain is Anthranilate phosphoribosyltransferase from Bacillus cereus (strain G9842).